The following is a 555-amino-acid chain: Phosphoglucomutase (555 aa).

Alpha-D-glucose 1,6-bisphosphate is bound by residues Arg-22 and Ser-114. Ser-114 serves as the catalytic Phosphoserine intermediate. Ser-114, Asp-279, Asp-281, and Asp-283 together coordinate Mg(2+). At Ser-114 the chain carries Phosphoserine. Alpha-D-glucose 1,6-bisphosphate contacts are provided by Asp-283, Arg-284, Thr-347, Glu-366, Ser-368, and Lys-379.

The protein belongs to the phosphohexose mutase family. In terms of assembly, monomer. Requires Mg(2+) as cofactor.

The protein resides in the cytoplasm. It carries out the reaction alpha-D-glucose 1-phosphate = alpha-D-glucose 6-phosphate. The catalysed reaction is O-phospho-L-seryl-[protein] + alpha-D-glucose 1-phosphate = alpha-D-glucose 1,6-bisphosphate + L-seryl-[protein]. It catalyses the reaction alpha-D-glucose 1,6-bisphosphate + L-seryl-[protein] = O-phospho-L-seryl-[protein] + alpha-D-glucose 6-phosphate. In terms of biological role, catalyzes the reversible isomerization of alpha-D-glucose 1-phosphate to alpha-D-glucose 6-phosphate. The mechanism proceeds via the intermediate compound alpha-D-glucose 1,6-bisphosphate. Key enzyme in hexose metabolism. The reverse reaction is an essential step for biosynthesis because glucose 1-phosphate is the starting point for the synthesis of UDP-glucose, which acts as a precursor for the synthesis of oligosaccharides and trehalose. The polypeptide is Phosphoglucomutase (pgmA) (Aspergillus oryzae (strain ATCC 42149 / RIB 40) (Yellow koji mold)).